The sequence spans 89 residues: Small ribosomal subunit protein uS17 (89 aa).

Belongs to the universal ribosomal protein uS17 family. Part of the 30S ribosomal subunit.

One of the primary rRNA binding proteins, it binds specifically to the 5'-end of 16S ribosomal RNA. The chain is Small ribosomal subunit protein uS17 from Albidiferax ferrireducens (strain ATCC BAA-621 / DSM 15236 / T118) (Rhodoferax ferrireducens).